The primary structure comprises 688 residues: Mitochondrial potassium channel ATP-binding subunit (688 aa).

The transit peptide at Met1–Gly31 directs the protein to the mitochondrion. The next 4 membrane-spanning stretches (helical) occupy residues Pro115–Ile135, Leu168–Leu188, Gly268–Leu288, and Val342–Val362. The 289-residue stretch at Leu121 to Arg409 folds into the ABC transmembrane type-1 domain. One can recognise an ABC transporter domain in the interval Ile442 to Arg679. Gly477–Ser484 provides a ligand contact to ATP.

Belongs to the ABC transporter superfamily. ABCB family. Multidrug resistance exporter (TC 3.A.1.201) subfamily. Component of the mitochondrial potassium channel (mitoK(ATP)).

Its subcellular location is the mitochondrion inner membrane. Functionally, ATP-binding subunit of the mitochondrial ATP-gated potassium channel (mitoK(ATP)). Together with pore-forming subunit CCDC51/MITOK of the mitoK(ATP) channel, mediates ATP-dependent potassium currents across the mitochondrial inner membrane. An increase in ATP intracellular levels closes the channel, inhibiting K(+) transport, whereas a decrease in ATP levels enhances K(+) uptake in the mitochondrial matrix. Plays a role in mitochondrial iron transport. Required for maintenance of normal cardiac function, possibly by influencing mitochondrial iron export and regulating the maturation of cytosolic iron sulfur cluster-containing enzymes. The chain is Mitochondrial potassium channel ATP-binding subunit from Xenopus tropicalis (Western clawed frog).